We begin with the raw amino-acid sequence, 324 residues long: D-erythronate dehydrogenase (324 aa).

The NAD(+) site is built by S125, Y149, and K153. Y149 (proton acceptor) is an active-site residue.

This sequence belongs to the NAD(P)-dependent epimerase/dehydratase family.

The enzyme catalyses D-erythronate + NAD(+) = 2-dehydro-D-erythronate + NADH + H(+). Functionally, catalyzes oxidation of D-erythronate to 2-oxo-tetronate. Can use either NAD(+) or NADP(+) as cosubstrate, with a preference for NAD(+). This Cupriavidus necator (strain ATCC 17699 / DSM 428 / KCTC 22496 / NCIMB 10442 / H16 / Stanier 337) (Ralstonia eutropha) protein is D-erythronate dehydrogenase.